The sequence spans 305 residues: GMP synthase [glutamine-hydrolyzing] subunit B (305 aa).

Residues 2 to 184 (VKPEKFIPKA…LKLPDEICER (183 aa)) form the GMPS ATP-PPase domain. 29 to 35 (SGGVDSS) is a binding site for ATP.

As to quaternary structure, heterodimer composed of a glutamine amidotransferase subunit (A) and a GMP-binding subunit (B).

The catalysed reaction is XMP + L-glutamine + ATP + H2O = GMP + L-glutamate + AMP + diphosphate + 2 H(+). It functions in the pathway purine metabolism; GMP biosynthesis; GMP from XMP (L-Gln route): step 1/1. In terms of biological role, catalyzes the synthesis of GMP from XMP. The chain is GMP synthase [glutamine-hydrolyzing] subunit B from Methanosarcina barkeri (strain Fusaro / DSM 804).